Consider the following 47-residue polypeptide: Large ribosomal subunit protein bL34 (47 aa).

It belongs to the bacterial ribosomal protein bL34 family.

This is Large ribosomal subunit protein bL34 from Rhodococcus opacus (strain B4).